Here is a 668-residue protein sequence, read N- to C-terminus: DNA ligase (668 aa).

NAD(+) contacts are provided by residues D32–D36, S81–L82, and E110. K112 (N6-AMP-lysine intermediate) is an active-site residue. R133, E167, K283, and K307 together coordinate NAD(+). Residues C401, C404, C419, and C424 each coordinate Zn(2+). Positions Q586 to K668 constitute a BRCT domain.

The protein belongs to the NAD-dependent DNA ligase family. LigA subfamily. It depends on Mg(2+) as a cofactor. Requires Mn(2+) as cofactor.

The catalysed reaction is NAD(+) + (deoxyribonucleotide)n-3'-hydroxyl + 5'-phospho-(deoxyribonucleotide)m = (deoxyribonucleotide)n+m + AMP + beta-nicotinamide D-nucleotide.. DNA ligase that catalyzes the formation of phosphodiester linkages between 5'-phosphoryl and 3'-hydroxyl groups in double-stranded DNA using NAD as a coenzyme and as the energy source for the reaction. It is essential for DNA replication and repair of damaged DNA. In Staphylococcus carnosus (strain TM300), this protein is DNA ligase.